The sequence spans 287 residues: Deoxyuridine 5'-triphosphate nucleotidohydrolase (287 aa).

173–175 (RSG) provides a ligand contact to substrate. The segment covering 264–275 (SSSKDTSDSQMS) has biased composition (low complexity). A disordered region spans residues 264 to 287 (SSSKDTSDSQMSRGDAGLGSSGLM).

The protein belongs to the dUTPase family. Requires Mg(2+) as cofactor.

The catalysed reaction is dUTP + H2O = dUMP + diphosphate + H(+). In terms of biological role, involved in nucleotide metabolism: produces dUMP, the immediate precursor of thymidine nucleotides and decreases the intracellular concentration of dUTP to avoid uracil incorporation into viral DNA. The protein is Deoxyuridine 5'-triphosphate nucleotidohydrolase of Saimiriine herpesvirus 2 (strain 11) (SaHV-2).